Reading from the N-terminus, the 176-residue chain is 3-hydroxydecanoyl-[acyl-carrier-protein] dehydratase (176 aa).

His-75 is a catalytic residue.

The protein belongs to the thioester dehydratase family. FabA subfamily. In terms of assembly, homodimer.

The protein localises to the cytoplasm. The catalysed reaction is a (3R)-hydroxyacyl-[ACP] = a (2E)-enoyl-[ACP] + H2O. The enzyme catalyses (3R)-hydroxydecanoyl-[ACP] = (2E)-decenoyl-[ACP] + H2O. It carries out the reaction (2E)-decenoyl-[ACP] = (3Z)-decenoyl-[ACP]. The protein operates within lipid metabolism; fatty acid biosynthesis. Necessary for the introduction of cis unsaturation into fatty acids. Catalyzes the dehydration of (3R)-3-hydroxydecanoyl-ACP to E-(2)-decenoyl-ACP and then its isomerization to Z-(3)-decenoyl-ACP. Can catalyze the dehydratase reaction for beta-hydroxyacyl-ACPs with saturated chain lengths up to 16:0, being most active on intermediate chain length. The chain is 3-hydroxydecanoyl-[acyl-carrier-protein] dehydratase from Glaesserella parasuis serovar 5 (strain SH0165) (Haemophilus parasuis).